The primary structure comprises 83 residues: Small ribosomal subunit protein bS20 (83 aa).

The interval 1–25 (MPNIKSAIKRVNTTHTAEERNISQK) is disordered. Basic and acidic residues predominate over residues 16-25 (TAEERNISQK).

Belongs to the bacterial ribosomal protein bS20 family.

Its function is as follows. Binds directly to 16S ribosomal RNA. This chain is Small ribosomal subunit protein bS20, found in Staphylococcus saprophyticus subsp. saprophyticus (strain ATCC 15305 / DSM 20229 / NCIMB 8711 / NCTC 7292 / S-41).